Reading from the N-terminus, the 48-residue chain is Large ribosomal subunit protein uL14 (48 aa).

This sequence belongs to the universal ribosomal protein uL14 family.

This Onchocerca volvulus protein is Large ribosomal subunit protein uL14 (RPL23).